The chain runs to 201 residues: Dephospho-CoA kinase (201 aa).

Residues 3–201 (ILGLTGGIGS…QIDSRVGCKI (199 aa)) form the DPCK domain. 11 to 16 (GSGKSL) is an ATP binding site.

This sequence belongs to the CoaE family.

The protein localises to the cytoplasm. The catalysed reaction is 3'-dephospho-CoA + ATP = ADP + CoA + H(+). It participates in cofactor biosynthesis; coenzyme A biosynthesis; CoA from (R)-pantothenate: step 5/5. Functionally, catalyzes the phosphorylation of the 3'-hydroxyl group of dephosphocoenzyme A to form coenzyme A. The protein is Dephospho-CoA kinase of Ehrlichia ruminantium (strain Welgevonden).